A 354-amino-acid polypeptide reads, in one-letter code: Aspartate carbamoyltransferase catalytic subunit (354 aa).

The carbamoyl phosphate site is built by Arg-67 and Thr-68. Lys-95 provides a ligand contact to L-aspartate. Arg-117, His-150, and Gln-153 together coordinate carbamoyl phosphate. 2 residues coordinate L-aspartate: Arg-190 and Arg-261. The carbamoyl phosphate site is built by Gly-302 and Pro-303.

It belongs to the aspartate/ornithine carbamoyltransferase superfamily. ATCase family. In terms of assembly, heterododecamer (2C3:3R2) of six catalytic PyrB chains organized as two trimers (C3), and six regulatory PyrI chains organized as three dimers (R2).

The catalysed reaction is carbamoyl phosphate + L-aspartate = N-carbamoyl-L-aspartate + phosphate + H(+). Its pathway is pyrimidine metabolism; UMP biosynthesis via de novo pathway; (S)-dihydroorotate from bicarbonate: step 2/3. Catalyzes the condensation of carbamoyl phosphate and aspartate to form carbamoyl aspartate and inorganic phosphate, the committed step in the de novo pyrimidine nucleotide biosynthesis pathway. The polypeptide is Aspartate carbamoyltransferase catalytic subunit (Synechococcus sp. (strain RCC307)).